The sequence spans 504 residues: uncharacterized protein (504 aa).

Residues 1–212 (MFMKSKAAGS…LYKTQDPVLD (212 aa)) constitute a propeptide that is removed on maturation.

This is an uncharacterized protein from Deinococcus radiodurans (strain ATCC 13939 / DSM 20539 / JCM 16871 / CCUG 27074 / LMG 4051 / NBRC 15346 / NCIMB 9279 / VKM B-1422 / R1).